Here is a 361-residue protein sequence, read N- to C-terminus: 5-formaminoimidazole-4-carboxamide-1-(beta)-D-ribofuranosyl 5'-monophosphate synthetase (361 aa).

Positions 27 and 94 each coordinate 5-amino-1-(5-phospho-beta-D-ribosyl)imidazole-4-carboxamide. The region spanning 116-348 (RAILRWEAER…MGQRIAKEIK (233 aa)) is the ATP-grasp domain. ATP is bound by residues 146-208 (PDDI…ANYC) and Glu230. Asn258 provides a ligand contact to 5-amino-1-(5-phospho-beta-D-ribosyl)imidazole-4-carboxamide. Residues Gln297 and Glu310 each contribute to the Mg(2+) site.

This sequence belongs to the phosphohexose mutase family. Mg(2+) is required as a cofactor. Requires Mn(2+) as cofactor.

It catalyses the reaction 5-amino-1-(5-phospho-beta-D-ribosyl)imidazole-4-carboxamide + formate + ATP = 5-formamido-1-(5-phospho-D-ribosyl)imidazole-4-carboxamide + ADP + phosphate. Its pathway is purine metabolism; IMP biosynthesis via de novo pathway; 5-formamido-1-(5-phospho-D-ribosyl)imidazole-4-carboxamide from 5-amino-1-(5-phospho-D-ribosyl)imidazole-4-carboxamide (formate route): step 1/1. Functionally, catalyzes the ATP- and formate-dependent formylation of 5-aminoimidazole-4-carboxamide-1-beta-d-ribofuranosyl 5'-monophosphate (AICAR) to 5-formaminoimidazole-4-carboxamide-1-beta-d-ribofuranosyl 5'-monophosphate (FAICAR) in the absence of folates. This chain is 5-formaminoimidazole-4-carboxamide-1-(beta)-D-ribofuranosyl 5'-monophosphate synthetase, found in Methanococcus maripaludis (strain C5 / ATCC BAA-1333).